The following is a 525-amino-acid chain: Chromosomal replication initiator protein DnaA (525 aa).

The segment at 1 to 71 (MNDFWQHCSA…SDLARDFWNA (71 aa)) is domain I, interacts with DnaA modulators. The tract at residues 71-188 (APIEVQFVLD…GEADSMYERS (118 aa)) is domain II. A disordered region spans residues 160–182 (AAAGRRTWRPGPGAAPANGGEAD). Low complexity predominate over residues 169 to 181 (PGPGAAPANGGEA). The segment at 189–405 (KLNPVLTFDN…GALRKILAYS (217 aa)) is domain III, AAA+ region. Residues G233, G235, K236, and T237 each coordinate ATP. Residues 406 to 525 (KFHGREISIE…LHVLEQTLKG (120 aa)) form a domain IV, binds dsDNA region.

The protein belongs to the DnaA family. As to quaternary structure, oligomerizes as a right-handed, spiral filament on DNA at oriC.

Its subcellular location is the cytoplasm. Its function is as follows. Plays an essential role in the initiation and regulation of chromosomal replication. ATP-DnaA binds to the origin of replication (oriC) to initiate formation of the DNA replication initiation complex once per cell cycle. Binds the DnaA box (a 9 base pair repeat at the origin) and separates the double-stranded (ds)DNA. Forms a right-handed helical filament on oriC DNA; dsDNA binds to the exterior of the filament while single-stranded (ss)DNA is stabiized in the filament's interior. The ATP-DnaA-oriC complex binds and stabilizes one strand of the AT-rich DNA unwinding element (DUE), permitting loading of DNA polymerase. After initiation quickly degrades to an ADP-DnaA complex that is not apt for DNA replication. Binds acidic phospholipids. In Burkholderia ambifaria (strain ATCC BAA-244 / DSM 16087 / CCUG 44356 / LMG 19182 / AMMD) (Burkholderia cepacia (strain AMMD)), this protein is Chromosomal replication initiator protein DnaA.